The primary structure comprises 430 residues: Na(+)/H(+) antiporter NhaA 2 (430 aa).

The next 10 membrane-spanning stretches (helical) occupy residues 11–31 (FVHGESFAGLLLVGTALIAFI), 60–80 (LSLEHWVNDGLMAVFFLLVGL), 97–117 (VALAVTAALGGMLVPAALYTA), 127–147 (GWGVPMSTDIAFALGVLALLG), 181–201 (LNLTFLTLAALTWGAALYAGW), 215–235 (VLLWFFVLKSGLHATIAGVLL), 288–308 (HALHPFVTFLVLPVFALTNAG), 309–329 (VPVAAGGFGSVSLGVLLGLLL), 356–376 (WGHMVGSGLLAGIGFTMSLFV), and 393–413 (GVLLASVLAALLGAGWLLLGI).

Belongs to the NhaA Na(+)/H(+) (TC 2.A.33) antiporter family.

It is found in the cell membrane. It catalyses the reaction Na(+)(in) + 2 H(+)(out) = Na(+)(out) + 2 H(+)(in). In terms of biological role, na(+)/H(+) antiporter that extrudes sodium in exchange for external protons. This is Na(+)/H(+) antiporter NhaA 2 from Deinococcus geothermalis (strain DSM 11300 / CIP 105573 / AG-3a).